The primary structure comprises 844 residues: Saxiphilin (844 aa).

An N-terminal signal peptide occupies residues 1–19 (MAPTFQTALFFTIISLSFA). One can recognise a Transferrin-like 1; first part domain in the interval 26-106 (VRWCAISDLE…IAEPYSSNRD (81 aa)). 19 cysteine pairs are disulfide-bonded: Cys29/Cys64, Cys39/Cys55, Cys110/Cys130, Cys141/Cys148, Cys150/Cys172, Cys180/Cys202, Cys222/Cys244, Cys277/Cys360, Cys322/Cys335, Cys332/Cys343, Cys388/Cys402, Cys495/Cys527, Cys505/Cys518, Cys552/Cys839, Cys570/Cys799, Cys607/Cys685, Cys641/Cys655, Cys652/Cys668, and Cys725/Cys739. Thyroglobulin type-1 domains lie at 107–172 (LQKC…RATC) and 177–244 (LPKC…PATC). The tract at residues 109-249 (KCLKERQQAL…IPATCQKHDL (141 aa)) is absent in transferrins. The 238-residue stretch at 245 to 482 (QKHDLVTTCH…LFHAMKALTG (238 aa)) folds into the Transferrin-like 1; second part domain. Residues 492 to 828 (VRWCTINKLE…YYTTVYGASR (337 aa)) enclose the Transferrin-like 2 domain.

It belongs to the transferrin family. In terms of assembly, monomer. In terms of tissue distribution, plasma. Highest levels of transcripts found in the liver, the lung, the pancreas and the brain.

Its subcellular location is the secreted. Functionally, binds specifically to the neurotoxin saxitoxin. Its physiological role may be to transport or sequester an endogenous organic molecule other than Fe(3+). It may participate in a detoxification mechanism for neutralizing a microbial toxin. This Aquarana catesbeiana (American bullfrog) protein is Saxiphilin.